A 339-amino-acid chain; its full sequence is N-acetyl-gamma-glutamyl-phosphate reductase (339 aa).

Cys-145 is an active-site residue.

It belongs to the NAGSA dehydrogenase family. Type 1 subfamily.

Its subcellular location is the cytoplasm. It catalyses the reaction N-acetyl-L-glutamate 5-semialdehyde + phosphate + NADP(+) = N-acetyl-L-glutamyl 5-phosphate + NADPH + H(+). Its pathway is amino-acid biosynthesis; L-arginine biosynthesis; N(2)-acetyl-L-ornithine from L-glutamate: step 3/4. Catalyzes the NADPH-dependent reduction of N-acetyl-5-glutamyl phosphate to yield N-acetyl-L-glutamate 5-semialdehyde. The sequence is that of N-acetyl-gamma-glutamyl-phosphate reductase from Thermotoga maritima (strain ATCC 43589 / DSM 3109 / JCM 10099 / NBRC 100826 / MSB8).